The following is a 488-amino-acid chain: Inosine-5'-monophosphate dehydrogenase (488 aa).

2 consecutive CBS domains span residues 95–153 (VITN…SMKI) and 157–214 (MTKE…PNSS). NAD(+) is bound by residues Asp251 and 301-303 (GIG). The K(+) site is built by Gly303 and Gly305. Residue Ser306 participates in IMP binding. Cys308 is a binding site for K(+). Catalysis depends on Cys308, which acts as the Thioimidate intermediate. IMP-binding positions include 341–343 (DGG), 364–365 (GS), and 388–392 (YRGMG). Arg404 functions as the Proton acceptor in the catalytic mechanism. Glu416 lines the IMP pocket. K(+)-binding residues include Glu470, Ser471, and His472.

This sequence belongs to the IMPDH/GMPR family. Homotetramer. K(+) is required as a cofactor.

The enzyme catalyses IMP + NAD(+) + H2O = XMP + NADH + H(+). It functions in the pathway purine metabolism; XMP biosynthesis via de novo pathway; XMP from IMP: step 1/1. With respect to regulation, mycophenolic acid (MPA) is a non-competitive inhibitor that prevents formation of the closed enzyme conformation by binding to the same site as the amobile flap. In contrast, mizoribine monophosphate (MZP) is a competitive inhibitor that induces the closed conformation. MPA is a potent inhibitor of mammalian IMPDHs but a poor inhibitor of the bacterial enzymes. MZP is a more potent inhibitor of bacterial IMPDH. Its function is as follows. Catalyzes the conversion of inosine 5'-phosphate (IMP) to xanthosine 5'-phosphate (XMP), the first committed and rate-limiting step in the de novo synthesis of guanine nucleotides, and therefore plays an important role in the regulation of cell growth. The chain is Inosine-5'-monophosphate dehydrogenase from Bacillus subtilis (strain 168).